A 635-amino-acid chain; its full sequence is 1-deoxy-D-xylulose-5-phosphate synthase (635 aa).

Residues H77 and 118-120 each bind thiamine diphosphate; that span reads GHA. A Mg(2+)-binding site is contributed by D150. Residues 151-152, N179, Y290, and E372 each bind thiamine diphosphate; that span reads AS. A Mg(2+)-binding site is contributed by N179.

It belongs to the transketolase family. DXPS subfamily. Homodimer. Requires Mg(2+) as cofactor. Thiamine diphosphate is required as a cofactor.

The catalysed reaction is D-glyceraldehyde 3-phosphate + pyruvate + H(+) = 1-deoxy-D-xylulose 5-phosphate + CO2. Its pathway is metabolic intermediate biosynthesis; 1-deoxy-D-xylulose 5-phosphate biosynthesis; 1-deoxy-D-xylulose 5-phosphate from D-glyceraldehyde 3-phosphate and pyruvate: step 1/1. Its function is as follows. Catalyzes the acyloin condensation reaction between C atoms 2 and 3 of pyruvate and glyceraldehyde 3-phosphate to yield 1-deoxy-D-xylulose-5-phosphate (DXP). This is 1-deoxy-D-xylulose-5-phosphate synthase from Leptospira borgpetersenii serovar Hardjo-bovis (strain JB197).